A 97-amino-acid polypeptide reads, in one-letter code: Lipolysis-activating peptide 1-alpha chain (97 aa).

Residues 1-21 (MNIMLFCSVFILVSLTGLSVS) form the signal peptide. An LCN-type CS-alpha/beta domain is found at 25-88 (PGNYPMSLYG…FWAAHKNHCK (64 aa)). Intrachain disulfides connect Cys39/Cys62, Cys48/Cys67, and Cys52/Cys69.

It belongs to the long (3 C-C) scorpion toxin superfamily. As to quaternary structure, monomer (edited version) and heterodimer (non-edited version) of this alpha chain and a beta chain (AC P0CI43). In terms of tissue distribution, expressed by the venom gland.

Its subcellular location is the secreted. Its function is as follows. The heterodimer non-edited LVP1 induces lipolysis in rat adipocytes. Induction of lipolysis by LVP1 appears to be mediated through the beta-2 adrenergic receptor pathway (ADRB2). The edited BmKBTx-like, similar to beta-toxins, may modulate voltage-gated sodium channels (Nav) and may block voltage-gated potassium channels (Kv). The protein is Lipolysis-activating peptide 1-alpha chain of Lychas mucronatus (Chinese swimming scorpion).